The chain runs to 156 residues: Ribosomal RNA large subunit methyltransferase H (156 aa).

S-adenosyl-L-methionine-binding positions include Leu-73, Gly-104, and Ile-123–Leu-128.

Belongs to the RNA methyltransferase RlmH family. As to quaternary structure, homodimer.

The protein resides in the cytoplasm. The catalysed reaction is pseudouridine(1915) in 23S rRNA + S-adenosyl-L-methionine = N(3)-methylpseudouridine(1915) in 23S rRNA + S-adenosyl-L-homocysteine + H(+). Specifically methylates the pseudouridine at position 1915 (m3Psi1915) in 23S rRNA. The polypeptide is Ribosomal RNA large subunit methyltransferase H (Xanthomonas axonopodis pv. citri (strain 306)).